The primary structure comprises 539 residues: MRITEILALFMVLVPVSLVIVAMFGYDQGNGFVQASRFITMEPNVTSSSDDSSLVQRDQEQKDSVDMSLLGGLLVSGFKKESCLSRYQSYLYRKASPYKPSLHLLSKLRAYEELHKRCGPGTRQYTNAERLLKQKQTGEMESQGCKYVVWMSFSGLGNRIISIASVFLYAMLTDRVLLVEGGEQFADLFCEPFLDTTWLLPKDFTLASQFSGFGQNSAHCHGDMLKRKLINESSVSSLSHLYLHLAHDYNEHDKMFFCEEDQNLLKNVPWLIMRTNNFFAPSLFLISSFEEELGMMFPEKGTVFHHLGRYLFHPSNQVWGLITRYYQAYLAKADERIGLQIRVFDEKSGVSPRVTKQIISCVQNENLLPRLSKGEEQYKQPSEEELKLKSVLVTSLTTGYFEILKTMYWENPTVTRDVIGIHQPSHEGHQQTEKLMHNRKAWAEMYLLSLTDKLVISAWSTFGYVAQGLGGLRAWILYKQENQTNPNPPCGRAMSPDPCFHAPPYYDCKAKKGTDTGNVVPHVRHCEDISWGLKLVDNF.

Over 1–5 the chain is Cytoplasmic; sequence MRITE. The chain crosses the membrane as a helical; Signal-anchor for type II membrane protein span at residues 6–26; the sequence is ILALFMVLVPVSLVIVAMFGY. At 27-539 the chain is on the lumenal side; the sequence is DQGNGFVQAS…SWGLKLVDNF (513 aa). N-linked (GlcNAc...) asparagine glycans are attached at residues Asn-44, Asn-231, and Asn-482.

The protein belongs to the glycosyltransferase 37 family. In terms of tissue distribution, expressed in roots, stems, leaves, flowers, siliques and seedlings.

It is found in the golgi apparatus. It localises to the golgi stack membrane. The protein operates within protein modification; protein glycosylation. Its function is as follows. May be involved in cell wall biosynthesis. May act as a fucosyltransferase. The polypeptide is Fucosyltransferase 2 (FUT2) (Arabidopsis thaliana (Mouse-ear cress)).